Here is a 100-residue protein sequence, read N- to C-terminus: Acylphosphatase (100 aa).

One can recognise an Acylphosphatase-like domain in the interval 3–92; that stretch reads RRSYSVIGRV…PLPDTFDIRF (90 aa). Active-site residues include arginine 18 and asparagine 36. The tract at residues 76 to 100 is disordered; the sequence is DDPAHEGPLPDTFDIRFRAPGSASE.

Belongs to the acylphosphatase family.

The enzyme catalyses an acyl phosphate + H2O = a carboxylate + phosphate + H(+). This is Acylphosphatase (acyP) from Nitratidesulfovibrio vulgaris (strain ATCC 29579 / DSM 644 / CCUG 34227 / NCIMB 8303 / VKM B-1760 / Hildenborough) (Desulfovibrio vulgaris).